We begin with the raw amino-acid sequence, 482 residues long: MGSQETNLAPHVLIFPLPIQGHVNSMLRLAELLCLAELDITFIVSEFSHSRLIKHTNVASRFARYPGFQFQPISDGLPDDHPRAGERVMDILPSTKNVTGPLFKQMMVENKCFSSATRRPITCIIADGVLSFAGDFAQEKGIPLIYFRTVSACSFWACFCMPELIESGDIPIKGNGMDLIVKSVPGMETFLRRRDLPGFCRVNDINEPKLQILKTETRQTTRAQAAILNTFEDLEGPILSQIRKHMPRLFTIGPSHSHLTSRLETKNIKTLISSGSFWEEDRSCVDWLDAQPPRSVLYVSFGSITVVTRDQLLEFWYGLVNSGQRFLWVMRPDSIMGKDGQSQIPADLEEGTKARGYMVGWAPQEEVLNHPAIGGFLTHSGWNSTLESIVAGVPMICWPYFADQMINSRFVSEIWKIGLDMKDTCDRETIVKMVRELMEIRKDEFLQRADHMAKLAKEAVSEGGSSYSNLDGLVDYIKSLII.

The active-site Proton acceptor is H22. H22 is a binding site for an anthocyanidin. D127 acts as the Charge relay in catalysis. UDP-alpha-D-glucose-binding residues include T149, A362, Q364, H379, W382, N383, S384, and E387. A402 provides a ligand contact to an anthocyanidin. UDP-alpha-D-glucose-binding residues include D403 and Q404.

Belongs to the UDP-glycosyltransferase family. Expressed in leaves, roots and stems. Lower levels of expression in flowers. Preferentially expressed in internal phloem parenchyma cells.

It catalyses the reaction 7-deoxyloganetate + UDP-alpha-D-glucose = 7-deoxyloganate + UDP + H(+). Iridoid glucosyltransferase acting exclusively on 7-deoxyloganetic acid. No activity with 7-deoxyloganetin. Catalyzes the fourth to last step in secologanin biosynthesis. In Catharanthus roseus (Madagascar periwinkle), this protein is 7-deoxyloganetic acid glucosyltransferase (UGT709C2).